Here is a 300-residue protein sequence, read N- to C-terminus: Estradiol 17-beta-dehydrogenase 11 (300 aa).

The N-terminal stretch at 1-18 (MKILLDLLLLLPLLIVCC) is a signal peptide. 40–67 (LITGAGHGIGRLTAYEFAKLKSKLVLWD) contacts NADP(+). Substrate is bound at residue Ser172. The active-site Proton acceptor is the Tyr185. Lys189 lines the NADP(+) pocket.

Belongs to the short-chain dehydrogenases/reductases (SDR) family. 17-beta-HSD 3 subfamily.

The protein localises to the endoplasmic reticulum. It localises to the lipid droplet. It catalyses the reaction 17beta-estradiol + NAD(+) = estrone + NADH + H(+). It carries out the reaction 17beta-estradiol + NADP(+) = estrone + NADPH + H(+). Its function is as follows. Can convert androstan-3-alpha,17-beta-diol (3-alpha-diol) to androsterone in vitro, suggesting that it may participate in androgen metabolism during steroidogenesis. May act by metabolizing compounds that stimulate steroid synthesis and/or by generating metabolites that inhibit it. Has no activity toward DHEA (dehydroepiandrosterone), or A-dione (4-androste-3,17-dione), and only a slight activity toward testosterone to A-dione. This is Estradiol 17-beta-dehydrogenase 11 (HSD17B11) from Macaca fascicularis (Crab-eating macaque).